The chain runs to 117 residues: cAMP-regulated phosphoprotein 19-A (117 aa).

Over residues 1–37 the composition is skewed to basic and acidic residues; that stretch reads MSGENQETKAQEESSALEQKEIDDKVVSPEKSEEIKL. The tract at residues 1–54 is disordered; the sequence is MSGENQETKAQEESSALEQKEIDDKVVSPEKSEEIKLKARYPNLGPKPGGSDFL. Position 28 is a phosphoserine; by CDK2 (serine 28). Serine 67 bears the Phosphoserine; by GWL mark. A disordered region spans residues 78–117; sequence KNKQLPTAASDKTEVTGDHIPTPQDLPQRKPSLVASKLAG. Threonine 99 bears the Phosphothreonine; by CDK2 mark. At serine 109 the chain carries Phosphoserine; by PKA.

This sequence belongs to the endosulfine family. As to quaternary structure, interacts (when phosphorylated at Ser-67) with ppp2r2d. In terms of processing, phosphorylation at Ser-67 by gwl during mitosis is essential for interaction with ppp2r2d (PR55-delta) and subsequent inactivation of PP2A. Phosphorylated by PKA.

It is found in the cytoplasm. In terms of biological role, protein phosphatase inhibitor that specifically inhibits protein phosphatase 2A (PP2A) during mitosis. When phosphorylated at Ser-67 during mitosis, specifically interacts with ppp2r2d (PR55-delta) and inhibits its activity, leading to inactivation of PP2A, an essential condition to keep cyclin-B1-CDK1 activity high during M phase. The chain is cAMP-regulated phosphoprotein 19-A (arpp19-a) from Xenopus laevis (African clawed frog).